The chain runs to 543 residues: Heparanase (543 aa).

The N-terminal stretch at 1–35 (MLLRSKPALPPPLMLLLLGPLGPLSPGALPRPAQA) is a signal peptide. Residues 62-64 (DAN) and threonine 97 contribute to the heparan sulfate group site. A propeptide spans 110-157 (STFEERSYWQSQVNQDICKYGSIPPDVEEKLRLEWPYQEQLLLREHYQ) (linker peptide). Cysteine 127 and cysteine 179 are oxidised to a cystine. Heparan sulfate group is bound at residue 158–162 (KKFKN). N-linked (GlcNAc...) asparagine glycans are attached at residues asparagine 162, asparagine 178, asparagine 200, and asparagine 217. Residue glutamate 225 is the Proton donor of the active site. Residue asparagine 238 is glycosylated (N-linked (GlcNAc...) asparagine). Residues 270–280 (QPRRKTAKMLK), histidine 296, and arginine 303 each bind heparan sulfate group. The interval 288–417 (EVIDSVTWHH…LLFKKLVGTK (130 aa)) is required for heterodimerization with the heparanase 8 kDa subunit. Residue glutamate 343 is the Nucleophile of the active site. Residues 348 to 350 (YGG) and 389 to 391 (GNY) each bind heparan sulfate group. Cysteine 437 and cysteine 542 are disulfide-bonded. Asparagine 459 carries N-linked (GlcNAc...) asparagine glycosylation. The required for transferring proheparanase to the Golgi apparatus, secretion and subsequent enzyme activity and for enhancement of PKB/AKT1 phosphorylation stretch occupies residues 527-543 (FSYSFFVIRNAKVAACI).

The protein belongs to the glycosyl hydrolase 79 family. Heterodimer; heterodimer formation between the 8 kDa and the 50 kDa subunits is required for enzyme activity. Interacts with TF; the interaction, inhibited by heparin, enhances the generation of activated factor X and activates coagulation. Interacts with HRG; the interaction is enhanced at acidic pH, partially inhibits binding of HPSE to cell surface receptors and modulates its enzymatic activity. Interacts with SDC1; the interaction enhances the shedding of SDC1. Interacts with HPSE2. Post-translationally, proteolytically processed. The cleavage of the 65 kDa form leads to the generation of a linker peptide, and 8 kDa and 50 kDa products. The active form, the 8/50 kDa heterodimer, is resistant to degradation. Complete removal of the linker peptide appears to be a prerequisite to the complete activation of the enzyme. In terms of processing, N-glycosylated. Glycosylation of the 50 kDa subunit appears to be essential for its solubility. Highly expressed in placenta and spleen and weakly expressed in lymph node, thymus, peripheral blood leukocytes, bone marrow, endothelial cells, fetal liver and tumor tissues. Also expressed in hair follicles, specifically in both Henle's and Huxley's layers of inner the root sheath (IRS) at anagen phase.

It is found in the lysosome membrane. Its subcellular location is the secreted. The protein localises to the nucleus. It catalyses the reaction endohydrolysis of (1-&gt;4)-beta-D-glycosidic bonds of heparan sulfate chains in heparan sulfate proteoglycan.. Its activity is regulated as follows. Inhibited by EDTA, laminarin sulfate and, to a lower extent, by heparin and sulfamin and activated by calcium and magnesium. Endoglycosidase that cleaves heparan sulfate proteoglycans (HSPGs) into heparan sulfate side chains and core proteoglycans. Participates in extracellular matrix (ECM) degradation and remodeling. Selectively cleaves the linkage between a glucuronic acid unit and an N-sulfo glucosamine unit carrying either a 3-O-sulfo or a 6-O-sulfo group. Can also cleave the linkage between a glucuronic acid unit and an N-sulfo glucosamine unit carrying a 2-O-sulfo group, but not linkages between a glucuronic acid unit and a 2-O-sulfated iduronic acid moiety. It is essentially inactive at neutral pH but becomes active under acidic conditions such as during tumor invasion and in inflammatory processes. Facilitates cell migration associated with metastasis, wound healing and inflammation. Enhances shedding of syndecans, and increases endothelial invasion and angiogenesis in myelomas. Acts as a procoagulant by increasing the generation of activation factor X in the presence of tissue factor and activation factor VII. Increases cell adhesion to the extracellular matrix (ECM), independent of its enzymatic activity. Induces AKT1/PKB phosphorylation via lipid rafts increasing cell mobility and invasion. Heparin increases this AKT1/PKB activation. Regulates osteogenesis. Enhances angiogenesis through up-regulation of SRC-mediated activation of VEGF. Implicated in hair follicle inner root sheath differentiation and hair homeostasis. This chain is Heparanase (HPSE), found in Homo sapiens (Human).